Reading from the N-terminus, the 175-residue chain is Large ribosomal subunit protein uL10 (175 aa).

It belongs to the universal ribosomal protein uL10 family. Part of the ribosomal stalk of the 50S ribosomal subunit. The N-terminus interacts with L11 and the large rRNA to form the base of the stalk. The C-terminus forms an elongated spine to which L12 dimers bind in a sequential fashion forming a multimeric L10(L12)X complex.

Forms part of the ribosomal stalk, playing a central role in the interaction of the ribosome with GTP-bound translation factors. This chain is Large ribosomal subunit protein uL10, found in Xylella fastidiosa (strain M12).